Consider the following 789-residue polypeptide: Trans-4-hydroxy-L-proline dehydratase (789 aa).

In terms of domain architecture, PFL spans 7 to 663; the sequence is ERTKKLREES…IMGASPNGRL (657 aa). Cysteine 434 (cysteine radical intermediate) is an active-site residue. Glutamate 436 (proton acceptor) is an active-site residue. One can recognise a Glycine radical domain in the interval 670–789; it reads EGISPEKGGD…EIIGRTEQTF (120 aa). Glycine 765 is subject to Glycine radical.

It belongs to the glycyl radical enzyme (GRE) family. HYPD subfamily. In terms of processing, requires the activating protein PflE to generate the key active site glycyl radical on Gly-765 that is involved in catalysis.

The enzyme catalyses trans-4-hydroxy-L-proline = (S)-1-pyrroline-5-carboxylate + H2O + H(+). In terms of biological role, glycine radical enzyme that catalyzes the dehydration of the non-proteinogenic amino acid trans-4-hydroxy-L-proline (Hyp) to produce delta(1)-pyrroline-5-carboxylate (P5C). Is involved in the anaerobic degradation of 4-hydroxyproline. This chain is Trans-4-hydroxy-L-proline dehydratase, found in Clostridioides difficile (Peptoclostridium difficile).